Consider the following 223-residue polypeptide: Small ribosomal subunit protein uS3 (223 aa).

The 69-residue stretch at 38 to 106 (IRKFLDEKLK…QVHINIVEIK (69 aa)) folds into the KH type-2 domain.

Belongs to the universal ribosomal protein uS3 family. Part of the 30S ribosomal subunit. Forms a tight complex with proteins S10 and S14.

In terms of biological role, binds the lower part of the 30S subunit head. Binds mRNA in the 70S ribosome, positioning it for translation. This is Small ribosomal subunit protein uS3 from Lactobacillus delbrueckii subsp. bulgaricus (strain ATCC 11842 / DSM 20081 / BCRC 10696 / JCM 1002 / NBRC 13953 / NCIMB 11778 / NCTC 12712 / WDCM 00102 / Lb 14).